Consider the following 730-residue polypeptide: Catalase R (730 aa).

His-105 is an active-site residue. Tyr-392 contacts heme. The tract at residues Pro-403–Asn-433 is disordered.

It belongs to the catalase family. Requires heme as cofactor.

It carries out the reaction 2 H2O2 = O2 + 2 H2O. In terms of biological role, occurs in almost all aerobically respiring organisms and serves to protect cells from the toxic effects of hydrogen peroxide. This chain is Catalase R (catR), found in Aspergillus niger.